A 298-amino-acid polypeptide reads, in one-letter code: Large ribosomal subunit protein uL18 (298 aa).

Belongs to the universal ribosomal protein uL18 family. As to quaternary structure, component of the large ribosomal subunit. Mature ribosomes consist of a small (40S) and a large (60S) subunit. The 40S subunit contains about 32 different proteins and 1 molecule of RNA (18S). The 60S subunit contains 45 different proteins and 3 molecules of RNA (25S, 5.8S and 5S).

It is found in the cytoplasm. Component of the ribosome, a large ribonucleoprotein complex responsible for the synthesis of proteins in the cell. The small ribosomal subunit (SSU) binds messenger RNAs (mRNAs) and translates the encoded message by selecting cognate aminoacyl-transfer RNA (tRNA) molecules. The large subunit (LSU) contains the ribosomal catalytic site termed the peptidyl transferase center (PTC), which catalyzes the formation of peptide bonds, thereby polymerizing the amino acids delivered by tRNAs into a polypeptide chain. The nascent polypeptides leave the ribosome through a tunnel in the LSU and interact with protein factors that function in enzymatic processing, targeting, and the membrane insertion of nascent chains at the exit of the ribosomal tunnel. The polypeptide is Large ribosomal subunit protein uL18 (Candida albicans (strain SC5314 / ATCC MYA-2876) (Yeast)).